A 387-amino-acid polypeptide reads, in one-letter code: Protein ERD1 homolog 2 (387 aa).

The next 8 helical transmembrane spans lie at 20 to 40 (IGLL…LIYI), 92 to 112 (AGYC…ILFL), 126 to 146 (PIYP…PFPW), 177 to 197 (FIVS…YIFG), 217 to 237 (GTFF…LQCL), 252 to 272 (LLSA…AIIH), 285 to 305 (GYLF…TFLW), and 326 to 346 (FPMF…VTWS). In terms of domain architecture, EXS spans 212 to 387 (DLKCDGTFFV…LFFHLDAISS (176 aa)).

Belongs to the ERD1 family.

Its subcellular location is the membrane. This is Protein ERD1 homolog 2 from Schizosaccharomyces pombe (strain 972 / ATCC 24843) (Fission yeast).